Reading from the N-terminus, the 275-residue chain is Trans-aconitate 2-methyltransferase (275 aa).

It belongs to the methyltransferase superfamily. Tam family.

It localises to the cytoplasm. It catalyses the reaction trans-aconitate + S-adenosyl-L-methionine = (E)-3-(methoxycarbonyl)pent-2-enedioate + S-adenosyl-L-homocysteine. Catalyzes the S-adenosylmethionine monomethyl esterification of trans-aconitate. In Pseudomonas aeruginosa (strain ATCC 15692 / DSM 22644 / CIP 104116 / JCM 14847 / LMG 12228 / 1C / PRS 101 / PAO1), this protein is Trans-aconitate 2-methyltransferase.